Here is a 406-residue protein sequence, read N- to C-terminus: Cysteine desulfurase IscS (406 aa).

Pyridoxal 5'-phosphate contacts are provided by residues 75-76 (AT), Asn-155, Gln-183, and 203-205 (SSH). Residue Lys-206 is modified to N6-(pyridoxal phosphate)lysine. Thr-243 contributes to the pyridoxal 5'-phosphate binding site. Cys-330 acts as the Cysteine persulfide intermediate in catalysis. A [2Fe-2S] cluster-binding site is contributed by Cys-330.

This sequence belongs to the class-V pyridoxal-phosphate-dependent aminotransferase family. NifS/IscS subfamily. In terms of assembly, homodimer. Forms a heterotetramer with IscU, interacts with other sulfur acceptors. Pyridoxal 5'-phosphate serves as cofactor.

The protein localises to the cytoplasm. It carries out the reaction (sulfur carrier)-H + L-cysteine = (sulfur carrier)-SH + L-alanine. It participates in cofactor biosynthesis; iron-sulfur cluster biosynthesis. Functionally, master enzyme that delivers sulfur to a number of partners involved in Fe-S cluster assembly, tRNA modification or cofactor biosynthesis. Catalyzes the removal of elemental sulfur atoms from cysteine to produce alanine. Functions as a sulfur delivery protein for Fe-S cluster synthesis onto IscU, an Fe-S scaffold assembly protein, as well as other S acceptor proteins. This is Cysteine desulfurase IscS from Haemophilus ducreyi (strain 35000HP / ATCC 700724).